Here is a 307-residue protein sequence, read N- to C-terminus: Methionyl-tRNA formyltransferase (307 aa).

108 to 111 (SLLP) contributes to the (6S)-5,6,7,8-tetrahydrofolate binding site.

Belongs to the Fmt family.

The catalysed reaction is L-methionyl-tRNA(fMet) + (6R)-10-formyltetrahydrofolate = N-formyl-L-methionyl-tRNA(fMet) + (6S)-5,6,7,8-tetrahydrofolate + H(+). Attaches a formyl group to the free amino group of methionyl-tRNA(fMet). The formyl group appears to play a dual role in the initiator identity of N-formylmethionyl-tRNA by promoting its recognition by IF2 and preventing the misappropriation of this tRNA by the elongation apparatus. This chain is Methionyl-tRNA formyltransferase, found in Stenotrophomonas maltophilia (strain K279a).